We begin with the raw amino-acid sequence, 306 residues long: uncharacterized protein (306 aa).

Residues Thr-277 to Glu-306 are a coiled coil.

This is an uncharacterized protein from Saccharolobus islandicus (Sulfolobus islandicus).